A 437-amino-acid polypeptide reads, in one-letter code: uncharacterized protein (437 aa).

Polar residues predominate over residues 63 to 87 (PSSANVSFQNSDDNLSTSRGRSASP). Disordered regions lie at residues 63-97 (PSSA…SNFP), 112-147 (VKKD…KKET), and 346-437 (PKNA…YSIW). Over residues 399–409 (EALSPSKSNPD) the composition is skewed to polar residues. Residues 425–437 (KKPSSSSSNYSIW) are compositionally biased toward low complexity.

This is an uncharacterized protein from Caenorhabditis elegans.